A 303-amino-acid chain; its full sequence is UDP-N-acetylenolpyruvoylglucosamine reductase (303 aa).

Residues 27–191 (VGGPAARLYK…ISAKLQLTPG (165 aa)) enclose the FAD-binding PCMH-type domain. Residue Arg171 is part of the active site. The Proton donor role is filled by Ser220. Glu291 is a catalytic residue.

This sequence belongs to the MurB family. Requires FAD as cofactor.

It is found in the cytoplasm. It carries out the reaction UDP-N-acetyl-alpha-D-muramate + NADP(+) = UDP-N-acetyl-3-O-(1-carboxyvinyl)-alpha-D-glucosamine + NADPH + H(+). Its pathway is cell wall biogenesis; peptidoglycan biosynthesis. Cell wall formation. The protein is UDP-N-acetylenolpyruvoylglucosamine reductase of Legionella pneumophila (strain Paris).